A 94-amino-acid polypeptide reads, in one-letter code: Small ribosomal subunit protein bS20c (94 aa).

Belongs to the bacterial ribosomal protein bS20 family.

The protein resides in the plastid. The protein localises to the chloroplast. Functionally, binds directly to 16S ribosomal RNA. This is Small ribosomal subunit protein bS20c from Porphyra purpurea (Red seaweed).